The primary structure comprises 273 residues: 6-carboxyhexanoate--CoA ligase (273 aa).

This sequence belongs to the BioW family. Homodimer. It depends on Mg(2+) as a cofactor.

It carries out the reaction heptanedioate + ATP + CoA = 6-carboxyhexanoyl-CoA + AMP + diphosphate. The protein operates within metabolic intermediate metabolism; pimeloyl-CoA biosynthesis; pimeloyl-CoA from pimelate: step 1/1. Its function is as follows. Catalyzes the transformation of pimelate into pimeloyl-CoA with concomitant hydrolysis of ATP to AMP. This is 6-carboxyhexanoate--CoA ligase from Alkalihalophilus pseudofirmus (strain ATCC BAA-2126 / JCM 17055 / OF4) (Bacillus pseudofirmus).